Consider the following 285-residue polypeptide: Protease HtpX homolog (285 aa).

The next 2 membrane-spanning stretches (helical) occupy residues 7–27 (TAML…MIGG) and 30–50 (GMTI…WFSD). H131 serves as a coordination point for Zn(2+). Residue E132 is part of the active site. H135 serves as a coordination point for Zn(2+). A run of 2 helical transmembrane segments spans residues 141 to 161 (ILIS…ANFA) and 177 to 197 (IAGI…QMAI). E202 serves as a coordination point for Zn(2+).

It belongs to the peptidase M48B family. Zn(2+) serves as cofactor.

The protein localises to the cell inner membrane. The polypeptide is Protease HtpX homolog (Paraburkholderia phytofirmans (strain DSM 17436 / LMG 22146 / PsJN) (Burkholderia phytofirmans)).